We begin with the raw amino-acid sequence, 130 residues long: Protein ApaG (130 aa).

The ApaG domain maps to 3 to 127; the sequence is SAMTRSINIL…FSLDSPHAKR (125 aa).

In Parvibaculum lavamentivorans (strain DS-1 / DSM 13023 / NCIMB 13966), this protein is Protein ApaG.